A 254-amino-acid polypeptide reads, in one-letter code: 3-deoxy-manno-octulosonate cytidylyltransferase (254 aa).

Belongs to the KdsB family.

It is found in the cytoplasm. The catalysed reaction is 3-deoxy-alpha-D-manno-oct-2-ulosonate + CTP = CMP-3-deoxy-beta-D-manno-octulosonate + diphosphate. Its pathway is nucleotide-sugar biosynthesis; CMP-3-deoxy-D-manno-octulosonate biosynthesis; CMP-3-deoxy-D-manno-octulosonate from 3-deoxy-D-manno-octulosonate and CTP: step 1/1. The protein operates within bacterial outer membrane biogenesis; lipopolysaccharide biosynthesis. Its function is as follows. Activates KDO (a required 8-carbon sugar) for incorporation into bacterial lipopolysaccharide in Gram-negative bacteria. The polypeptide is 3-deoxy-manno-octulosonate cytidylyltransferase (Pseudomonas entomophila (strain L48)).